The following is a 709-amino-acid chain: MATTSLDLAKVRNIGIMAHIDAGKTTTTERILFYTGVSYKIGEVHDGAATMDWMEQEQERGITITSAATTCHWPLNDVDHTINIIDTPGHVDFTVEVERSLRVLDGAVTVFDGVAGVEPQSETVWRQADRYGVPRICFVNKLDRTGADFFRCVDMIVDRLGATPIVMQLPIGAEADFTGVVDLVSMKAFVYPEEAAKGEMYNVVDIPENLQESAAEWRGKLLEAVAENDDAMMELYLEGNEPTQEQLHDAIRRITLASKGSADSVTVTPVFCGTAFKNKGVQPLLDAVVRYLPSPLDVEAIEGHDVKDPEKVIARKPSDDEPFSGLAFKIASDPHLGKLTFVRIYSGRLEAGTAVLNSVKGKKERIGKIYRMHANKREEIASVGAGDIIAVMGLKQTTTGETLCDDKNPVILESMDFPAPVIQVAIEPKSKGDQEKLGVAIQRLSEEDPSFQVHSDEETGQTIIGGMGELHLEVLVDRMKREFRVEANVGKPQVAYRETIRKAVERIDYTHKKQTGGTGQFAKVQIALEPIEGGDASYEFVNKVTGGRIPREYIPSVDAGAQEAMQFGILAGYEMVGVRVTLLDGGYHEVDSSELAFKIAGSQAFKEGARKASPVLLEPMMAVEVTTPEDYMGDVIGDLNSRRGQIQAMEERSGARVVKGLVPLSEMFGYVGDLRSKTSGRASYSMQFDSYAEVPRNVAEEIIAKAKGE.

A tr-type G domain is found at 9–296 (AKVRNIGIMA…AVVRYLPSPL (288 aa)). GTP-binding positions include 18–25 (AHIDAGKT), 86–90 (DTPGH), and 140–143 (NKLD).

It belongs to the TRAFAC class translation factor GTPase superfamily. Classic translation factor GTPase family. EF-G/EF-2 subfamily.

It localises to the cytoplasm. Catalyzes the GTP-dependent ribosomal translocation step during translation elongation. During this step, the ribosome changes from the pre-translocational (PRE) to the post-translocational (POST) state as the newly formed A-site-bound peptidyl-tRNA and P-site-bound deacylated tRNA move to the P and E sites, respectively. Catalyzes the coordinated movement of the two tRNA molecules, the mRNA and conformational changes in the ribosome. This Streptomyces griseus subsp. griseus (strain JCM 4626 / CBS 651.72 / NBRC 13350 / KCC S-0626 / ISP 5235) protein is Elongation factor G.